The following is a 336-amino-acid chain: MEMMVLLSQEHPELPSAELRSVLMSEGIDFSVIESGSGYEVIDAPRSTWKILKKRLAYAHEISEVIGYAAADDLDDAAEEIDWSKYVRESFAVRIRKLCGDVDSRTLERTIGAIIKEDTGLKVDLEKPWTLIRPVLINDRFILTRRLAVISKEHFNQARPHKRPFFYPGSMSPKLARCMVNLSGVKAGDRILDPFCGTGGILIEAGLMGVRVVGADIDWRMVEGTRENLQHYGITDFEVIRSDARDLRLDEKVDAIVTDPPYGISASTAGEKSEKLYREFLDSAHSNLAEGGMICMAAPHYLDLESLIDERFSIRERYSMRMHRSLTRVIRVIERV.

The THUMP domain maps to 50–147 (KILKKRLAYA…NDRFILTRRL (98 aa)).

It belongs to the methyltransferase superfamily. Trm-G10 family. Monomer.

The protein resides in the cytoplasm. It catalyses the reaction guanosine(10) in tRNA + 2 S-adenosyl-L-methionine = N(2)-dimethylguanosine(10) in tRNA + 2 S-adenosyl-L-homocysteine + 2 H(+). Functionally, catalyzes the adenosylmethionine-dependent methylation of the exocyclic amino group (N(2)) of guanosine at position 10 of various tRNAs. Acts via a two-step process that leads to the formation of either N(2)-monomethyl (m(2)G) or N(2)-dimethylguanosine (m(2)(2)G). The protein is tRNA (guanine(10)-N2)-dimethyltransferase (trmG10) of Methanothermobacter thermautotrophicus (strain ATCC 29096 / DSM 1053 / JCM 10044 / NBRC 100330 / Delta H) (Methanobacterium thermoautotrophicum).